We begin with the raw amino-acid sequence, 347 residues long: Fructose-1,6-bisphosphatase class 1 (347 aa).

Mg(2+)-binding residues include glutamate 107, aspartate 128, leucine 130, and aspartate 131. Residues 131–134 (DGSS), asparagine 224, tyrosine 257, and lysine 286 contribute to the substrate site. Glutamate 292 is a Mg(2+) binding site.

This sequence belongs to the FBPase class 1 family. Homotetramer. It depends on Mg(2+) as a cofactor.

The protein resides in the cytoplasm. It carries out the reaction beta-D-fructose 1,6-bisphosphate + H2O = beta-D-fructose 6-phosphate + phosphate. The protein operates within carbohydrate biosynthesis; gluconeogenesis. The polypeptide is Fructose-1,6-bisphosphatase class 1 (Sorangium cellulosum (strain So ce56) (Polyangium cellulosum (strain So ce56))).